Reading from the N-terminus, the 82-residue chain is Small ribosomal subunit protein bS18A (82 aa).

This sequence belongs to the bacterial ribosomal protein bS18 family. In terms of assembly, part of the 30S ribosomal subunit. Forms a tight heterodimer with protein bS6.

In terms of biological role, binds as a heterodimer with protein bS6 to the central domain of the 16S rRNA, where it helps stabilize the platform of the 30S subunit. In Streptomyces griseus subsp. griseus (strain JCM 4626 / CBS 651.72 / NBRC 13350 / KCC S-0626 / ISP 5235), this protein is Small ribosomal subunit protein bS18A.